The primary structure comprises 432 residues: Glutamyl-tRNA reductase (432 aa).

Residues 55–58 (TCNR), S114, 119–121 (ETQ), and Q125 each bind substrate. C56 acts as the Nucleophile in catalysis. 194 to 199 (GAGEMI) contacts NADP(+).

The protein belongs to the glutamyl-tRNA reductase family. In terms of assembly, homodimer.

It catalyses the reaction (S)-4-amino-5-oxopentanoate + tRNA(Glu) + NADP(+) = L-glutamyl-tRNA(Glu) + NADPH + H(+). Its pathway is porphyrin-containing compound metabolism; protoporphyrin-IX biosynthesis; 5-aminolevulinate from L-glutamyl-tRNA(Glu): step 1/2. Functionally, catalyzes the NADPH-dependent reduction of glutamyl-tRNA(Glu) to glutamate 1-semialdehyde (GSA). The protein is Glutamyl-tRNA reductase of Burkholderia lata (strain ATCC 17760 / DSM 23089 / LMG 22485 / NCIMB 9086 / R18194 / 383).